The sequence spans 459 residues: Bifunctional protein GlmU (459 aa).

Residues 1–230 are pyrophosphorylase; sequence MTTRNTIILA…FDESMGVNDR (230 aa). UDP-N-acetyl-alpha-D-glucosamine contacts are provided by residues 9–12, Lys23, Gln73, 78–79, 101–103, Gly140, Glu155, Asn170, and Asn228; these read LAAG, GT, and SGD. Asp103 is a binding site for Mg(2+). Asn228 contacts Mg(2+). A linker region spans residues 231-251; sequence VALSAATKIMRDRINEAHMRD. The N-acetyltransferase stretch occupies residues 252-459; it reads GVTLIDPATT…YQKLPYRGED (208 aa). UDP-N-acetyl-alpha-D-glucosamine is bound by residues Arg333 and Lys351. His363 serves as the catalytic Proton acceptor. UDP-N-acetyl-alpha-D-glucosamine contacts are provided by Tyr366 and Asn377. Acetyl-CoA-binding positions include 386–387, Ser405, Ala423, and Arg440; that span reads NY.

This sequence in the N-terminal section; belongs to the N-acetylglucosamine-1-phosphate uridyltransferase family. It in the C-terminal section; belongs to the transferase hexapeptide repeat family. Homotrimer. Requires Mg(2+) as cofactor.

Its subcellular location is the cytoplasm. The catalysed reaction is alpha-D-glucosamine 1-phosphate + acetyl-CoA = N-acetyl-alpha-D-glucosamine 1-phosphate + CoA + H(+). It catalyses the reaction N-acetyl-alpha-D-glucosamine 1-phosphate + UTP + H(+) = UDP-N-acetyl-alpha-D-glucosamine + diphosphate. It functions in the pathway nucleotide-sugar biosynthesis; UDP-N-acetyl-alpha-D-glucosamine biosynthesis; N-acetyl-alpha-D-glucosamine 1-phosphate from alpha-D-glucosamine 6-phosphate (route II): step 2/2. It participates in nucleotide-sugar biosynthesis; UDP-N-acetyl-alpha-D-glucosamine biosynthesis; UDP-N-acetyl-alpha-D-glucosamine from N-acetyl-alpha-D-glucosamine 1-phosphate: step 1/1. Its pathway is bacterial outer membrane biogenesis; LPS lipid A biosynthesis. In terms of biological role, catalyzes the last two sequential reactions in the de novo biosynthetic pathway for UDP-N-acetylglucosamine (UDP-GlcNAc). The C-terminal domain catalyzes the transfer of acetyl group from acetyl coenzyme A to glucosamine-1-phosphate (GlcN-1-P) to produce N-acetylglucosamine-1-phosphate (GlcNAc-1-P), which is converted into UDP-GlcNAc by the transfer of uridine 5-monophosphate (from uridine 5-triphosphate), a reaction catalyzed by the N-terminal domain. In Levilactobacillus brevis (strain ATCC 367 / BCRC 12310 / CIP 105137 / JCM 1170 / LMG 11437 / NCIMB 947 / NCTC 947) (Lactobacillus brevis), this protein is Bifunctional protein GlmU.